Reading from the N-terminus, the 116-residue chain is Cation channel sperm-associated auxiliary subunit TMEM262 (116 aa).

The Cytoplasmic segment spans residues 1 to 16 (MWLQDRIATFFFPKGM). A helical membrane pass occupies residues 17–38 (MLTTAALMLFFLHLGIFIRDVH). Residues 39 to 51 (NFCITYHYDHMSF) are Extracellular-facing. Residues 52-72 (HYTVVLMFSQVISICWAAMGS) traverse the membrane as a helical segment. Over 73–84 (LYAEMTENKYVC) the chain is Cytoplasmic. The chain crosses the membrane as a helical span at residues 85-107 (FSALTILMLNGAMFFNRLSLEFL). Over 108–116 (AIEYREEHH) the chain is Extracellular.

Component of the CatSper complex or CatSpermasome composed of the core pore-forming members CATSPER1, CATSPER2, CATSPER3 and CATSPER4 as well as auxiliary members CATSPERB, CATSPERG, CATSPERD, CATSPERE, CATSPERZ, C2CD6/CATSPERT, TMEM249, TMEM262 and EFCAB9. HSPA1 may be an additional auxiliary complex member. The core complex members CATSPER1, CATSPER2, CATSPER3 and CATSPER4 form a heterotetrameric channel. The auxiliary CATSPERB, CATSPERG, CATSPERD and CATSPERE subunits form a pavilion-like structure over the pore which stabilizes the complex through interactions with CATSPER4, CATSPER3, CATSPER1 and CATSPER2 respectively. TMEM262/CATSPERH interacts with CATSPERB, further stabilizing the complex. C2CD6/CATSPERT interacts at least with CATSPERD and is required for targeting the CatSper complex in the flagellar membrane.

It is found in the cell projection. It localises to the cilium. Its subcellular location is the flagellum membrane. Auxiliary component of the CatSper complex, a complex involved in sperm cell hyperactivation. The chain is Cation channel sperm-associated auxiliary subunit TMEM262 from Homo sapiens (Human).